The sequence spans 326 residues: tRNA-modifying protein YgfZ (326 aa).

Folate contacts are provided by W27 and W189.

This sequence belongs to the tRNA-modifying YgfZ family.

It is found in the cytoplasm. Its function is as follows. Folate-binding protein involved in regulating the level of ATP-DnaA and in the modification of some tRNAs. It is probably a key factor in regulatory networks that act via tRNA modification, such as initiation of chromosomal replication. In Escherichia coli (strain SMS-3-5 / SECEC), this protein is tRNA-modifying protein YgfZ.